The chain runs to 218 residues: Leucine-rich repeat protein 1 (218 aa).

Residues 1–27 form the signal peptide; the sequence is MASRNYRWELFAASLTLTLALIHLVEA. 4 LRR repeats span residues 94-117, 119-140, 141-165, and 167-190; these read EHLQ…LGNL, NLIS…SLGK, LKSL…LTAI, and SLKV…PFAH.

Interacts with HIR1.

Involved in plant defense response. This chain is Leucine-rich repeat protein 1, found in Arabidopsis thaliana (Mouse-ear cress).